The following is a 159-amino-acid chain: Ribosomal RNA large subunit methyltransferase H (159 aa).

Residues leucine 76, glycine 108, and 127-132 (FSKMTF) contribute to the S-adenosyl-L-methionine site.

It belongs to the RNA methyltransferase RlmH family. Homodimer.

Its subcellular location is the cytoplasm. It carries out the reaction pseudouridine(1915) in 23S rRNA + S-adenosyl-L-methionine = N(3)-methylpseudouridine(1915) in 23S rRNA + S-adenosyl-L-homocysteine + H(+). Specifically methylates the pseudouridine at position 1915 (m3Psi1915) in 23S rRNA. The protein is Ribosomal RNA large subunit methyltransferase H of Clostridium novyi (strain NT).